The primary structure comprises 407 residues: MKYDHLLVRYGELTLKGSNRKKFVNQLRNNVNKSLKGLDGFVVKGKRDRMYIELEDHADINEITYRLSKIFGIKSISPVLKVEKTIEAMSAAAIKFAQQFEENSTFKIDVKRADKNFPMDTYELQRELGGTVLKQIENVSVNVKRADHEIRVEVRLDAIYMYEEVVPGSGGLPVGTGGKTLLMLSGGIDSPVAGMEVMRRGVTIEAIHFHSPPFTSDQAKEKVIELTRILAERVGPIKLHIVPFTELQKQVNKVVHPRYTMTSTRRMMMRVADKLVHQIGALAIVNGENLGQVASQTLHSMYAINNVTSTPVLRPLLTYDKEEIIIKSKEIGTFETSIQPFEDCCTIFTPKNPVTEPNFEKVVQYESVFDFEEMINRAVENIETLEITSDYKTIKEQQTNQLINDFL.

The region spanning 61 to 165 (NEITYRLSKI…LDAIYMYEEV (105 aa)) is the THUMP domain. Residues 183 to 184 (ML), 208 to 209 (HF), Arg265, Gly287, and Gln296 contribute to the ATP site.

This sequence belongs to the ThiI family.

It localises to the cytoplasm. The enzyme catalyses [ThiI sulfur-carrier protein]-S-sulfanyl-L-cysteine + a uridine in tRNA + 2 reduced [2Fe-2S]-[ferredoxin] + ATP + H(+) = [ThiI sulfur-carrier protein]-L-cysteine + a 4-thiouridine in tRNA + 2 oxidized [2Fe-2S]-[ferredoxin] + AMP + diphosphate. It catalyses the reaction [ThiS sulfur-carrier protein]-C-terminal Gly-Gly-AMP + S-sulfanyl-L-cysteinyl-[cysteine desulfurase] + AH2 = [ThiS sulfur-carrier protein]-C-terminal-Gly-aminoethanethioate + L-cysteinyl-[cysteine desulfurase] + A + AMP + 2 H(+). The protein operates within cofactor biosynthesis; thiamine diphosphate biosynthesis. Functionally, catalyzes the ATP-dependent transfer of a sulfur to tRNA to produce 4-thiouridine in position 8 of tRNAs, which functions as a near-UV photosensor. Also catalyzes the transfer of sulfur to the sulfur carrier protein ThiS, forming ThiS-thiocarboxylate. This is a step in the synthesis of thiazole, in the thiamine biosynthesis pathway. The sulfur is donated as persulfide by IscS. The sequence is that of Probable tRNA sulfurtransferase from Staphylococcus aureus (strain N315).